The chain runs to 152 residues: Snaclec coagulation factor IX/factor X-binding protein subunit A (152 aa).

Positions 1–23 (MGRFIFVSFGLLVVAASLSGTGA) are cleaved as a signal peptide. Intrachain disulfides connect C25/C36, C53/C150, and C125/C142. A C-type lectin domain is found at 32–151 (YEGHCYKAFE…CGQRIPFVCE (120 aa)). Residues S64, E66, and E70 each coordinate Ca(2+). E151 contributes to the Ca(2+) binding site.

This sequence belongs to the snaclec family. In terms of assembly, heterodimer of subunits A and B; disulfide-linked. Expressed by the venom gland.

Its subcellular location is the secreted. Functionally, anticoagulant protein which binds to the gamma-carboxyglutamic acid-domain regions of factors IX (F9) and factor X (F10) in the presence of calcium with a 1 to 1 stoichiometry. The protein is Snaclec coagulation factor IX/factor X-binding protein subunit A of Trimeresurus stejnegeri (Chinese green tree viper).